We begin with the raw amino-acid sequence, 925 residues long: MEGAQESPAESGSSVPWSEEPAGSAKVPEVSLSEESEGCTRPLEATPPKLCGYLSKFGGKGPIRGWKSRWFFFDERKCHLYYSRTAQDANPLDSIDLSSAVFDCKADAEEGTFEIKTPNRIITLKAATKQAMLYWLQQLQMKRWEFHNSLPALPAAHDAALAGNGPALRLELEQEEEEEEAFLCPVKTPTDLVGVAAAWQPVHARPLALQNISLKHLGTEIQNTMCNIRGNKQTQGANHRPPGEDSPLIEETQREEQPSPPGPGAPGKDPANSLKSSLTTSLIRKAKSQSNTFPLFSEGLMRNRTAQEKVLALEQQVLMLTKELKAQKELVKILHKALEAAQQEKRVSSAYLAAAQDKDRLELVRHKVRQIAELGRRVEALERERESLAQTASLQEQEIRELQQHVQLLLDKNQAKQQVICKLSEKVTQDFMKAPEEADRDFLSQQEKMEHLKDDMEAYRTQNRFLNSEIHQVTKIWRKVAEKEKALLMKCAYLQAQNCQVESKYLAGLRRLQEALGVEAGECSELLRQLIQEALQWEASEASADSVVLSPSTISEYDEYGFLTVPNYEVEDLRLLAKIQALEVHSHHLLAHEAVERPLRERWATLGELAPSAELKQLLRAGVPHEHRPRVWRWLIRLRVQHLQAPGCYQALLSRGQACKHSAARQIELDLNRTFPNNKHFTCPTSSFPDKLRRVLLAFSWQNPTIGYCQGLNRLAAIALLVLDEEESAFWCLVAIVETIMPADYYSKTLLASQVDQRVLQDLLLEKLPRLMAHLGQRHVDLSFITFNWFLVVFADSLISNILLQVWDAFLYEGIKVVFRYALAIFKYNEEALLRLQDSLEIYQYLHFFTKTICDSRKLMHIAFNDMNPFPMKQLRQLRAAHRERLEAELNELEQLKAEYLETRAAQGPAVPEGSPSEDEGEAEP.

Met-1 carries the post-translational modification N-acetylmethionine. A disordered region spans residues Met-1–Arg-41. The interaction with CADH1 stretch occupies residues Met-1 to Glu-171. The PH domain occupies Pro-47 to Trp-144. A disordered region spans residues Asn-231–Leu-278. Residues Ser-297–Pro-435 are interaction with RAC1. Positions Arg-302–Lys-475 form a coiled coil. Residues Gly-622–Gly-814 form the Rab-GAP TBC domain. A coiled-coil region spans residues Met-872–Gln-907. The disordered stretch occupies residues Arg-904–Pro-925. Over residues Pro-916–Pro-925 the composition is skewed to acidic residues. A Phosphoserine modification is found at Ser-917.

In terms of assembly, interacts with activated RAC1 and CDH1.

The protein resides in the cytoplasm. Its subcellular location is the cytoplasmic vesicle. It localises to the cell junction. In terms of biological role, may act as a GTPase-activating protein for Rab family protein(s). Signal effector acting as a linker between RAC1 and RAB7A, leading to RAB7A inactivation and further inhibition of cadherin degradation. The chain is TBC1 domain family member 2A (TBC1D2) from Bos taurus (Bovine).